The chain runs to 212 residues: Thymidine kinase (212 aa).

Residues G16 to S23 and D99 to Q102 each bind ATP. E100 functions as the Proton acceptor in the catalytic mechanism.

This sequence belongs to the thymidine kinase family. As to quaternary structure, homotetramer.

It is found in the cytoplasm. The catalysed reaction is thymidine + ATP = dTMP + ADP + H(+). In Deinococcus radiodurans (strain ATCC 13939 / DSM 20539 / JCM 16871 / CCUG 27074 / LMG 4051 / NBRC 15346 / NCIMB 9279 / VKM B-1422 / R1), this protein is Thymidine kinase.